Here is a 454-residue protein sequence, read N- to C-terminus: Protoheme IX farnesyltransferase 1 (454 aa).

The unknown stretch occupies residues 1–186 (MRTTGFSGLL…AYFELTKPRL (186 aa)). Transmembrane regions (helical) follow at residues 9–29 (LLSA…TAAL), 59–79 (GVAA…WSET), 87–107 (LALA…VATG), and 113–133 (LHLF…AWHL). A disordered region spans residues 137 to 164 (TGSDDAPESPPELAPPVDEEPAATEQPA). 9 helical membrane passes run 186 to 206 (LMWL…TPTV), 209 to 229 (VVFT…FNHV), 251 to 271 (VPVA…LWAF), 276 to 296 (LLAA…YTLI), 300 to 320 (NTVQ…LIGY), 321 to 341 (AAVT…IFLW), 377 to 397 (HIVF…AVTD), 398 to 418 (LGWL…WAVV), and 433 to 453 (FHAS…DSLA). The protoheme IX prenyltransferase stretch occupies residues 187–451 (MWLLCLVAGA…LVLVAILIDS (265 aa)).

It in the C-terminal section; belongs to the UbiA prenyltransferase family. Protoheme IX farnesyltransferase subfamily.

It localises to the cell membrane. The enzyme catalyses heme b + (2E,6E)-farnesyl diphosphate + H2O = Fe(II)-heme o + diphosphate. The protein operates within porphyrin-containing compound metabolism; heme O biosynthesis; heme O from protoheme: step 1/1. In terms of biological role, converts heme B (protoheme IX) to heme O by substitution of the vinyl group on carbon 2 of heme B porphyrin ring with a hydroxyethyl farnesyl side group. This is Protoheme IX farnesyltransferase 1 (ctaB1) from Natronomonas pharaonis (strain ATCC 35678 / DSM 2160 / CIP 103997 / JCM 8858 / NBRC 14720 / NCIMB 2260 / Gabara) (Halobacterium pharaonis).